The sequence spans 102 residues: Defensin (102 aa).

The N-terminal stretch at 1-25 is a signal peptide; it reads MKCATIVCTIAVVLAATLLNGSVQA. The propeptide occupies 26 to 62; sequence APQEEAALSGGANLNTLLDELPEETHHAALENYRAKR. Disulfide bonds link C65–C92, C78–C98, and C82–C100.

The protein belongs to the invertebrate defensin family. Type 1 subfamily.

It localises to the secreted. Functionally, responsible for the anti Gram-positive activity of immune hemolymph. The sequence is that of Defensin (Def1) from Anopheles gambiae (African malaria mosquito).